We begin with the raw amino-acid sequence, 135 residues long: Galectin-1 (135 aa).

Ala2 carries the post-translational modification N-acetylalanine. The Galectin domain maps to 4-135; the sequence is GLVASNLNLK…DFKIKCVAFD (132 aa). Residues Lys13 and Lys29 each carry the N6-acetyllysine modification. A Phosphoserine; by FAM20C modification is found at Ser30. A beta-D-galactoside is bound by residues 45 to 49, His53, Asn62, and 69 to 72; these read HFNPR and WGTE. Position 108 is an N6-acetyllysine; alternate (Lys108). Residue Lys108 is modified to N6-succinyllysine; alternate. Lys128 carries the post-translational modification N6-acetyllysine.

Homodimer. Binds LGALS3BP. Interacts with CD2, CD3, CD4, CD6, CD7, CD43, ALCAM and CD45. Interacts with laminin (via poly-N-acetyllactosamine). Interacts with SUSD2. Interacts with cargo receptor TMED10; the interaction mediates the translocation from the cytoplasm into the ERGIC (endoplasmic reticulum-Golgi intermediate compartment) and thereby secretion. Interacts with CD69. As to expression, expressed in placenta, maternal decidua and fetal membranes. Within placenta, expressed in trophoblasts, stromal cells, villous endothelium, syncytiotrophoblast apical membrane and villous stroma. Within fetal membranes, expressed in amnion, chorioamniotic mesenchyma and chorion (at protein level). Expressed in cardiac, smooth, and skeletal muscle, neurons, thymus, kidney and hematopoietic cells.

It is found in the secreted. The protein localises to the extracellular space. The protein resides in the extracellular matrix. Its subcellular location is the cytoplasm. Lectin that binds beta-galactoside and a wide array of complex carbohydrates. Plays a role in regulating apoptosis, cell proliferation and cell differentiation. Inhibits CD45 protein phosphatase activity and therefore the dephosphorylation of Lyn kinase. Strong inducer of T-cell apoptosis. Plays a negative role in Th17 cell differentiation via activation of the receptor CD69. In Homo sapiens (Human), this protein is Galectin-1.